The chain runs to 602 residues: Aspartate--tRNA(Asp/Asn) ligase (602 aa).

Residue Glu187 coordinates L-aspartate. Residues 211–214 (QQFK) are aspartate. Arg233 and His461 together coordinate L-aspartate. 233-235 (RDE) lines the ATP pocket. Glu495 is a binding site for ATP. Position 502 (Arg502) interacts with L-aspartate. Residue 547–550 (GLDR) coordinates ATP.

Belongs to the class-II aminoacyl-tRNA synthetase family. Type 1 subfamily. As to quaternary structure, homodimer.

It localises to the cytoplasm. The enzyme catalyses tRNA(Asx) + L-aspartate + ATP = L-aspartyl-tRNA(Asx) + AMP + diphosphate. In terms of biological role, aspartyl-tRNA synthetase with relaxed tRNA specificity since it is able to aspartylate not only its cognate tRNA(Asp) but also tRNA(Asn). Reaction proceeds in two steps: L-aspartate is first activated by ATP to form Asp-AMP and then transferred to the acceptor end of tRNA(Asp/Asn). The chain is Aspartate--tRNA(Asp/Asn) ligase from Chlorobium phaeovibrioides (strain DSM 265 / 1930) (Prosthecochloris vibrioformis (strain DSM 265)).